The following is a 143-amino-acid chain: Large ribosomal subunit protein uL15 (143 aa).

Residues 1–51 (MRLNSIAPAPGSRPSAKRVGRGIGSGLGKTAGRGHKGQKARAGGYHKVGFE) form a disordered region. Gly residues predominate over residues 21–31 (RGIGSGLGKTA).

It belongs to the universal ribosomal protein uL15 family. As to quaternary structure, part of the 50S ribosomal subunit.

Binds to the 23S rRNA. The protein is Large ribosomal subunit protein uL15 of Thioalkalivibrio sulfidiphilus (strain HL-EbGR7).